The chain runs to 214 residues: Holliday junction branch migration complex subunit RuvA (214 aa).

The interval 1–63 is domain I; sequence MISFLRGTVA…EDSLTLFGFS (63 aa). The tract at residues 64–142 is domain II; that stretch reads SDDEREVFDV…PHGTGAAAAP (79 aa). The flexible linker stretch occupies residues 143–153; the sequence is AAAASAPWKPQ. The tract at residues 153–214 is domain III; that stretch reads QVVAAMTSLG…RAGNRVGSRG (62 aa).

The protein belongs to the RuvA family. As to quaternary structure, homotetramer. Forms an RuvA(8)-RuvB(12)-Holliday junction (HJ) complex. HJ DNA is sandwiched between 2 RuvA tetramers; dsDNA enters through RuvA and exits via RuvB. An RuvB hexamer assembles on each DNA strand where it exits the tetramer. Each RuvB hexamer is contacted by two RuvA subunits (via domain III) on 2 adjacent RuvB subunits; this complex drives branch migration. In the full resolvosome a probable DNA-RuvA(4)-RuvB(12)-RuvC(2) complex forms which resolves the HJ.

The protein resides in the cytoplasm. Functionally, the RuvA-RuvB-RuvC complex processes Holliday junction (HJ) DNA during genetic recombination and DNA repair, while the RuvA-RuvB complex plays an important role in the rescue of blocked DNA replication forks via replication fork reversal (RFR). RuvA specifically binds to HJ cruciform DNA, conferring on it an open structure. The RuvB hexamer acts as an ATP-dependent pump, pulling dsDNA into and through the RuvAB complex. HJ branch migration allows RuvC to scan DNA until it finds its consensus sequence, where it cleaves and resolves the cruciform DNA. This chain is Holliday junction branch migration complex subunit RuvA, found in Arthrobacter sp. (strain FB24).